Reading from the N-terminus, the 192-residue chain is Peptidyl-tRNA hydrolase (192 aa).

TRNA is bound at residue Tyr-17. The active-site Proton acceptor is the His-22. TRNA contacts are provided by Phe-68, Asn-70, and Asn-116.

The protein belongs to the PTH family. Monomer.

It is found in the cytoplasm. It carries out the reaction an N-acyl-L-alpha-aminoacyl-tRNA + H2O = an N-acyl-L-amino acid + a tRNA + H(+). Its function is as follows. Hydrolyzes ribosome-free peptidyl-tRNAs (with 1 or more amino acids incorporated), which drop off the ribosome during protein synthesis, or as a result of ribosome stalling. In terms of biological role, catalyzes the release of premature peptidyl moieties from peptidyl-tRNA molecules trapped in stalled 50S ribosomal subunits, and thus maintains levels of free tRNAs and 50S ribosomes. The sequence is that of Peptidyl-tRNA hydrolase from Hydrogenovibrio crunogenus (strain DSM 25203 / XCL-2) (Thiomicrospira crunogena).